Here is a 179-residue protein sequence, read N- to C-terminus: CMT1A duplicated region transcript 4 protein homolog (179 aa).

Residues 1-15 (MISRPESSLSGLESS) show a composition bias toward low complexity. Residues 1–20 (MISRPESSLSGLESSQEVQK) are disordered.

The polypeptide is CMT1A duplicated region transcript 4 protein homolog (Cdrt4) (Mus musculus (Mouse)).